The following is an 80-amino-acid chain: Acyl carrier protein (80 aa).

Positions 1–76 (MTLEEKIIEI…DVIDYLKVRN (76 aa)) constitute a Carrier domain. Ser-36 bears the O-(pantetheine 4'-phosphoryl)serine mark.

Belongs to the acyl carrier protein (ACP) family. In terms of processing, 4'-phosphopantetheine is transferred from CoA to a specific serine of apo-ACP by AcpS. This modification is essential for activity because fatty acids are bound in thioester linkage to the sulfhydryl of the prosthetic group.

It localises to the cytoplasm. It participates in lipid metabolism; fatty acid biosynthesis. In terms of biological role, carrier of the growing fatty acid chain in fatty acid biosynthesis. This chain is Acyl carrier protein, found in Syntrophus aciditrophicus (strain SB).